The chain runs to 451 residues: Zinc metalloproteinase nas-16 (451 aa).

The region spanning 70 to 273 is the Peptidase M12A domain; the sequence is QVVTKLFSPQ…LTINTAYNCK (204 aa). 4 disulfides stabilise this stretch: cysteine 127–cysteine 272, cysteine 148–cysteine 167, cysteine 274–cysteine 291, and cysteine 296–cysteine 305. An N-linked (GlcNAc...) asparagine glycan is attached at asparagine 133. Residue histidine 175 participates in Zn(2+) binding. Glutamate 176 is an active-site residue. Zn(2+)-binding residues include histidine 179 and histidine 185. In terms of domain architecture, EGF-like spans 267-306; it reads NTAYNCKCPSELLCANGGYTNPSNCLECICPLGYGGVLCD. N-linked (GlcNAc...) asparagine glycans are attached at residues asparagine 363 and asparagine 438.

Zn(2+) is required as a cofactor.

The protein resides in the secreted. In terms of biological role, metalloprotease. The polypeptide is Zinc metalloproteinase nas-16 (nas-16) (Caenorhabditis elegans).